Reading from the N-terminus, the 537-residue chain is CTP synthase (537 aa).

The segment at 1–268 (MPAKFIFVTG…DSIVVERLKL (268 aa)) is amidoligase domain. Residue Ser14 participates in CTP binding. Ser14 is a binding site for UTP. 15-20 (SLGKGI) lines the ATP pocket. An L-glutamine-binding site is contributed by Tyr55. An ATP-binding site is contributed by Asp72. Mg(2+)-binding residues include Asp72 and Glu142. Residues 149 to 151 (DIE), 189 to 194 (KTKPTQ), and Lys225 contribute to the CTP site. UTP is bound by residues 189–194 (KTKPTQ) and Lys225. A Glutamine amidotransferase type-1 domain is found at 293 to 534 (EIALVGKYVT…IGAACRRAGG (242 aa)). Position 354 (Gly354) interacts with L-glutamine. The Nucleophile; for glutamine hydrolysis role is filled by Cys381. L-glutamine contacts are provided by residues 382-385 (LGMQ), Glu405, and Arg462. Active-site residues include His507 and Glu509.

It belongs to the CTP synthase family. Homotetramer.

It catalyses the reaction UTP + L-glutamine + ATP + H2O = CTP + L-glutamate + ADP + phosphate + 2 H(+). It carries out the reaction L-glutamine + H2O = L-glutamate + NH4(+). The catalysed reaction is UTP + NH4(+) + ATP = CTP + ADP + phosphate + 2 H(+). The protein operates within pyrimidine metabolism; CTP biosynthesis via de novo pathway; CTP from UDP: step 2/2. With respect to regulation, allosterically activated by GTP, when glutamine is the substrate; GTP has no effect on the reaction when ammonia is the substrate. The allosteric effector GTP functions by stabilizing the protein conformation that binds the tetrahedral intermediate(s) formed during glutamine hydrolysis. Inhibited by the product CTP, via allosteric rather than competitive inhibition. Catalyzes the ATP-dependent amination of UTP to CTP with either L-glutamine or ammonia as the source of nitrogen. Regulates intracellular CTP levels through interactions with the four ribonucleotide triphosphates. The chain is CTP synthase from Moorella thermoacetica (strain ATCC 39073 / JCM 9320).